Reading from the N-terminus, the 182-residue chain is Trypsin inhibitor 2 (182 aa).

Q1 is subject to Pyrrolidone carboxylic acid. Cystine bridges form between C40/C84 and C136/C147.

The protein belongs to the protease inhibitor I3 (leguminous Kunitz-type inhibitor) family.

This is Trypsin inhibitor 2 from Psophocarpus tetragonolobus (Winged bean).